A 336-amino-acid chain; its full sequence is Cytosolic Fe-S cluster assembly factor NBP35 (336 aa).

The interval 1–20 (MIATQRPFPIPSPVPLAPSS) is disordered. 4 residues coordinate [4Fe-4S] cluster: cysteine 35, cysteine 49, cysteine 52, and cysteine 58. Residue 88–95 (GKGGVGKS) participates in ATP binding. Positions 261 and 264 each coordinate [4Fe-4S] cluster.

It belongs to the Mrp/NBP35 ATP-binding proteins family. NUBP1/NBP35 subfamily. Heterotetramer of 2 NBP35 and 2 CFD1 chains. Requires [4Fe-4S] cluster as cofactor.

It is found in the cytoplasm. Its function is as follows. Component of the cytosolic iron-sulfur (Fe/S) protein assembly (CIA) machinery. Required for maturation of extramitochondrial Fe-S proteins. The NBP35-CFD1 heterotetramer forms a Fe-S scaffold complex, mediating the de novo assembly of an Fe-S cluster and its transfer to target apoproteins. This Cryptococcus neoformans var. neoformans serotype D (strain B-3501A) (Filobasidiella neoformans) protein is Cytosolic Fe-S cluster assembly factor NBP35.